The following is a 926-amino-acid chain: Alpha-aminoadipic semialdehyde synthase, mitochondrial (926 aa).

A mitochondrion-targeting transit peptide spans 1–27; the sequence is MLQVHRTGLGRLGVSLSKGLHHKAVLA. Residues 28–476 form a lysine-ketoglutarate reductase region; the sequence is VRREDVNAWE…ESRERAQSLS (449 aa). Lys48 and Lys56 each carry N6-acetyllysine. Lys93 is modified (N6-acetyllysine; alternate). Residue Lys93 is modified to N6-succinyllysine; alternate. An N6-acetyllysine modification is found at Lys128. Lys138 is subject to N6-acetyllysine; alternate. Lys138 bears the N6-succinyllysine; alternate mark. The residue at position 274 (Lys274) is an N6-succinyllysine. N6-acetyllysine; alternate is present on Lys286. Lys286 is subject to N6-succinyllysine; alternate. Position 333 is an N6-succinyllysine (Lys333). Lys458 is modified (N6-acetyllysine; alternate). Residue Lys458 is modified to N6-succinyllysine; alternate. A saccharopine dehydrogenase region spans residues 477–926; that stretch reads MGTRRKVLVL…IYTTQSTIKP (450 aa). NAD(+) contacts are provided by Ser488, Asp512, and Gln516. Position 523 is an N6-acetyllysine; alternate (Lys523). Lys523 carries the N6-succinyllysine; alternate modification. Ile533 contacts NAD(+). Residue Lys535 is modified to N6-acetyllysine; alternate. At Lys535 the chain carries N6-succinyllysine; alternate. Positions 554, 576, and 577 each coordinate NAD(+). 577–578 lines the L-saccharopine pocket; that stretch reads SY. The residue at position 584 (Lys584) is an N6-acetyllysine; alternate. Lys584 carries the N6-succinyllysine; alternate modification. The NAD(+) site is built by Leu603, Asp604, and Pro605. Asp604 contacts L-saccharopine. Arg703 provides a ligand contact to L-saccharopine. Position 707 is an N6-acetyllysine (Lys707). L-saccharopine is bound at residue 724-726; it reads TLR. Position 732 is an N6-succinyllysine (Lys732). Lys739 bears the N6-acetyllysine mark. Lys761 carries the post-translational modification N6-acetyllysine; alternate. Lys761 carries the N6-succinyllysine; alternate modification. Lys780 is modified (N6-acetyllysine).

The protein in the N-terminal section; belongs to the AlaDH/PNT family. This sequence in the C-terminal section; belongs to the saccharopine dehydrogenase family. As to quaternary structure, homotetramer. As to expression, expressed in all 16 tissues examined with highest expression in the liver.

It is found in the mitochondrion. It catalyses the reaction L-saccharopine + NADP(+) + H2O = L-lysine + 2-oxoglutarate + NADPH + H(+). It carries out the reaction L-saccharopine + NAD(+) + H2O = (S)-2-amino-6-oxohexanoate + L-glutamate + NADH + H(+). Its pathway is amino-acid degradation; L-lysine degradation via saccharopine pathway; glutaryl-CoA from L-lysine: step 1/6. It participates in amino-acid degradation; L-lysine degradation via saccharopine pathway; glutaryl-CoA from L-lysine: step 2/6. In terms of biological role, bifunctional enzyme that catalyzes the first two steps in lysine degradation. In Homo sapiens (Human), this protein is Alpha-aminoadipic semialdehyde synthase, mitochondrial.